The following is an 874-amino-acid chain: Leucine--tRNA ligase (874 aa).

A 'HIGH' region motif is present at residues 43–53 (PYPSGRIHIGH). Residues 630 to 634 (KMSKS) carry the 'KMSKS' region motif. Lys633 is a binding site for ATP.

It belongs to the class-I aminoacyl-tRNA synthetase family.

The protein localises to the cytoplasm. It carries out the reaction tRNA(Leu) + L-leucine + ATP = L-leucyl-tRNA(Leu) + AMP + diphosphate. This chain is Leucine--tRNA ligase, found in Bradyrhizobium sp. (strain BTAi1 / ATCC BAA-1182).